Consider the following 92-residue polypeptide: Alpha-conotoxin FrXXA (92 aa).

Positions 1–24 are cleaved as a signal peptide; sequence MPKLEMMLLVLLILPLSYFDSAGG. Residues 25 to 45 constitute a propeptide that is removed on maturation; that stretch reads QAVKVDGHGDGMDRYLQRDDR. Disulfide bonds link Cys-63-Cys-72, Cys-68-Cys-80, Cys-73-Cys-90, and Cys-78-Cys-92.

It belongs to the conotoxin D superfamily. In terms of assembly, homodimer; disulfide-linked. In terms of processing, the homodimer contains 10 disulfide bonds. Expressed by the venom duct.

The protein resides in the secreted. Its function is as follows. Alpha-conotoxins act on postsynaptic membranes, they bind to the nicotinic acetylcholine receptors (nAChR) and thus inhibit them. Through its two C-terminal domains, this homodimeric protein would bind to two nAChR allosteric sites, located outside the nAChR C-loop of the principal binding face and at the adjacent binding interface in a clockwise direction. This toxin blocks both neuronal and muscular subtypes: human alpha-7/CHRNA7, human alpha-3-beta-2 (CHRNA3-CHRNB2), human alpha-4-beta-2 (CHRNA4-CHRNB2), mouse adult muscular subtype alpha-1-beta-1-delta-epsilon (CHRNA1-CHRNB1-CHRND-CHRNE), and mouse fetal muscular subtype alpha-1-beta-1-gamma-delta (CHRNA1-CHRNB1-CHRNG-CHRND). Shows different dissociation rates towards the different subtypes, with a very slow rate towards alpha-7 subtype (almost irreversible), followed by the adult muscular subtype, the fetal muscular subtype, alpha-3-beta-2 and alpha-4-beta-2 (almost entirely reversible within a few minutes of washing). This chain is Alpha-conotoxin FrXXA, found in Conus fergusoni (Ferguson's cone).